Consider the following 317-residue polypeptide: Homoserine O-acetyltransferase (317 aa).

The active-site Acyl-thioester intermediate is Cys142. Residues Lys163 and Ser192 each contribute to the substrate site. Catalysis depends on His235, which acts as the Proton acceptor. Glu237 is a catalytic residue. Substrate is bound at residue Arg249.

Belongs to the MetA family.

The protein resides in the cytoplasm. The catalysed reaction is L-homoserine + acetyl-CoA = O-acetyl-L-homoserine + CoA. Its pathway is amino-acid biosynthesis; L-methionine biosynthesis via de novo pathway; O-acetyl-L-homoserine from L-homoserine: step 1/1. In terms of biological role, transfers an acetyl group from acetyl-CoA to L-homoserine, forming acetyl-L-homoserine. This chain is Homoserine O-acetyltransferase, found in Rhizorhabdus wittichii (strain DSM 6014 / CCUG 31198 / JCM 15750 / NBRC 105917 / EY 4224 / RW1) (Sphingomonas wittichii).